The primary structure comprises 303 residues: Cytochrome c oxidase subunit 2 (303 aa).

The N-terminal stretch at 1–25 (MRHSTTLTGCATGAAGLLAATAAAA) is a signal peptide. The next 2 helical transmembrane spans lie at 60–80 (FILVIIAAITIFVTLLILYAV) and 104–124 (WTIVPIVILVAIGAFSLPVLF). Cu cation is bound by residues His-217, Cys-252, Cys-256, and His-260.

Belongs to the cytochrome c oxidase subunit 2 family. Cu cation is required as a cofactor.

The protein resides in the cell membrane. The catalysed reaction is 4 Fe(II)-[cytochrome c] + O2 + 8 H(+)(in) = 4 Fe(III)-[cytochrome c] + 2 H2O + 4 H(+)(out). Its function is as follows. Subunits I and II form the functional core of the enzyme complex. Electrons originating in cytochrome c are transferred via heme a and Cu(A) to the binuclear center formed by heme a3 and Cu(B). In Cereibacter sphaeroides (Rhodobacter sphaeroides), this protein is Cytochrome c oxidase subunit 2 (ctaC).